Here is a 200-residue protein sequence, read N- to C-terminus: 3-isopropylmalate dehydratase small subunit (200 aa).

The protein belongs to the LeuD family. LeuD type 1 subfamily. As to quaternary structure, heterodimer of LeuC and LeuD.

The catalysed reaction is (2R,3S)-3-isopropylmalate = (2S)-2-isopropylmalate. Its pathway is amino-acid biosynthesis; L-leucine biosynthesis; L-leucine from 3-methyl-2-oxobutanoate: step 2/4. Functionally, catalyzes the isomerization between 2-isopropylmalate and 3-isopropylmalate, via the formation of 2-isopropylmaleate. The polypeptide is 3-isopropylmalate dehydratase small subunit (Vibrio cholerae serotype O1 (strain ATCC 39541 / Classical Ogawa 395 / O395)).